The primary structure comprises 135 residues: Mu-like prophage FluMu protein gp46 (135 aa).

The protein to phage Mu protein gp46.

This chain is Mu-like prophage FluMu protein gp46, found in Haemophilus influenzae (strain ATCC 51907 / DSM 11121 / KW20 / Rd).